A 325-amino-acid polypeptide reads, in one-letter code: NADH-quinone oxidoreductase subunit H (325 aa).

8 consecutive transmembrane segments (helical) span residues 11–31 (ILLT…CGAF), 81–101 (VIFT…FAIV), 114–134 (IGIL…LFAG), 154–174 (LSYE…AGSF), 186–206 (VWNV…GVAV), 237–257 (FFVG…TLFF), 265–285 (LPPF…FILI), and 304–324 (ICLP…LWQA).

Belongs to the complex I subunit 1 family. As to quaternary structure, NDH-1 is composed of 13 different subunits. Subunits NuoA, H, J, K, L, M, N constitute the membrane sector of the complex.

It is found in the cell inner membrane. The catalysed reaction is a quinone + NADH + 5 H(+)(in) = a quinol + NAD(+) + 4 H(+)(out). Its function is as follows. NDH-1 shuttles electrons from NADH, via FMN and iron-sulfur (Fe-S) centers, to quinones in the respiratory chain. The immediate electron acceptor for the enzyme in this species is believed to be ubiquinone. Couples the redox reaction to proton translocation (for every two electrons transferred, four hydrogen ions are translocated across the cytoplasmic membrane), and thus conserves the redox energy in a proton gradient. This subunit may bind ubiquinone. In Shigella flexneri serotype 5b (strain 8401), this protein is NADH-quinone oxidoreductase subunit H.